Consider the following 210-residue polypeptide: MQAEGRGTGGSTGDADGPGGPGIPDGPGGNAGGPGEAGATGGRGPRGAGAARASGPRGGAPRGPHGGAASAQDGRCPCGARRPDSRLLELHITMPFSSPMEAELVRRILSRDAAPLPRPGAVLKDFTVSGNLLFMSVRDQDREGAGRMRVVGWGLGSASPEGQKARDLRTPKHKVSEQRPGTPGPPPPEGAQGDGCRGVAFNVMFSAPHI.

Composition is skewed to gly residues over residues 1–47 and 56–66; these read MQAE…GPRG and PRGGAPRGPHG. 2 disordered regions span residues 1–80 and 154–197; these read MQAE…PCGA and GLGS…DGCR. Over residues 163–177 the composition is skewed to basic and acidic residues; sequence QKARDLRTPKHKVSE.

The protein belongs to the CTAG/PCC1 family. As to expression, testis and very low level in placenta and in some uterus samples. Observed in 25-50% of tumor samples of melanomas, non-small-cell lung carcinomas, bladder, prostate and head and neck cancers.

This Homo sapiens (Human) protein is Cancer/testis antigen 2 (CTAG2).